Here is a 625-residue protein sequence, read N- to C-terminus: UvrABC system protein C (625 aa).

In terms of domain architecture, GIY-YIG spans 13–92; sequence DKPGVYIMKD…IKKHRPKFNI (80 aa). One can recognise a UVR domain in the interval 204-239; that stretch reads EDIIKKLEKDMKEAADNLEFERAARIRDKINSLKHI.

This sequence belongs to the UvrC family. In terms of assembly, interacts with UvrB in an incision complex.

Its subcellular location is the cytoplasm. Functionally, the UvrABC repair system catalyzes the recognition and processing of DNA lesions. UvrC both incises the 5' and 3' sides of the lesion. The N-terminal half is responsible for the 3' incision and the C-terminal half is responsible for the 5' incision. In Acetivibrio thermocellus (strain ATCC 27405 / DSM 1237 / JCM 9322 / NBRC 103400 / NCIMB 10682 / NRRL B-4536 / VPI 7372) (Clostridium thermocellum), this protein is UvrABC system protein C.